We begin with the raw amino-acid sequence, 402 residues long: Zinc finger protein 809 (402 aa).

Positions 4–75 (VSFEDVAVDF…AEASSRSLPG (72 aa)) constitute a KRAB domain. Positions 118 to 139 (QEVSKGTTSRHRRAPVKSLCRK) are disordered. Residues 125 to 139 (TSRHRRAPVKSLCRK) show a composition bias toward basic residues. 7 consecutive C2H2-type zinc fingers follow at residues 155–178 (YECKDCEKVFCNNSTLIKHYRRTH), 184–206 (YECDECSKMYYWKSDLTSHQKTH), 213–235 (YECSECGKAFFRKSHLNAHERTH), 241–263 (YECTECRKAFYYKSDLTRHKKTH), 269–291 (FKCEECKKAFSRKSKLAIHQKKH), 297–319 (YECTECKKAFSHQSQLTAHRIAH), and 325–347 (YECKECNKSFHWKCQLTAHQKRH).

Belongs to the krueppel C2H2-type zinc-finger protein family.

The protein localises to the nucleus. In terms of biological role, transcription factor specifically required to repress retrotransposons in embryonic stem cells. Recognizes and binds retroviral DNA sequences from a large subset of mammalian retroviruses and retroelements and repress their expression by recruiting a repressive complex containing TRIM28/KAP1. This Mus musculus (Mouse) protein is Zinc finger protein 809.